Here is a 262-residue protein sequence, read N- to C-terminus: Indole-3-glycerol phosphate synthase (262 aa).

The protein belongs to the TrpC family.

It catalyses the reaction 1-(2-carboxyphenylamino)-1-deoxy-D-ribulose 5-phosphate + H(+) = (1S,2R)-1-C-(indol-3-yl)glycerol 3-phosphate + CO2 + H2O. Its pathway is amino-acid biosynthesis; L-tryptophan biosynthesis; L-tryptophan from chorismate: step 4/5. This is Indole-3-glycerol phosphate synthase from Thiobacillus denitrificans (strain ATCC 25259 / T1).